Reading from the N-terminus, the 385-residue chain is Serine/threonine-protein kinase 52 (385 aa).

The 275-residue stretch at 82–356 folds into the Protein kinase domain; sequence LIIKTVLARG…PEMDEVVPML (275 aa). ATP-binding positions include 88–96 and Lys-109; that span reads LARGTFGTV. Residue Asp-227 is the Proton acceptor of the active site.

The protein belongs to the protein kinase superfamily. Ser/Thr protein kinase family. In terms of assembly, binds to CBC1. Associates with PHOT1, PHOT2, BLUS1 and PM H(+)-ATPase (e.g. AHA1). Post-translationally, autophosphorylated. Phosphorylated by HT1 in response to low CO(2) concentrations. As to expression, expressed in guard cells.

It localises to the cytoplasm. The protein localises to the cytosol. The enzyme catalyses L-seryl-[protein] + ATP = O-phospho-L-seryl-[protein] + ADP + H(+). It carries out the reaction L-threonyl-[protein] + ATP = O-phospho-L-threonyl-[protein] + ADP + H(+). Functionally, serine/threonine protein kinase that phosphorylates proteins on serine and threonine residues. Collectively with CBC1, acts as a negative regulator of stomatal opening, probably via the inhibition of plasma membrane-type ATPases (AHA1 and AHA2) activity in guard cells, but in an abscisic acid (ABA)-independent manner. However, at low concentrations of CO(2), together with CBC1, stimulates stomatal opening via the inhibition of S-type anion channels in response to blue light (BL) and red light (RL), thus being a key component to maximize photosynthesis in the light under low CO(2) conditions. Required for temperature decrease in leaves. Downstream target of HIGH LEAF TEMPERATURE1 (HT1) during low CO(2)-induced stomatal opening. The chain is Serine/threonine-protein kinase 52 from Arabidopsis thaliana (Mouse-ear cress).